Here is a 286-residue protein sequence, read N- to C-terminus: Protein N-terminal amidase (286 aa).

The region spanning 1–286 (MKFGCVQFFP…NGIVVGELEK (286 aa)) is the CN hydrolase domain. The active-site Proton acceptor is the Glu43. Residue Lys121 is the Proton donor of the active site. Cys155 acts as the Nucleophile in catalysis.

Belongs to the carbon-nitrogen hydrolase superfamily.

Its subcellular location is the cytoplasm. It is found in the nucleus. In terms of biological role, deamidates N-terminal Asn and Gln. Component of a targeting complex in the N-end rule pathway. The chain is Protein N-terminal amidase (nta1) from Schizosaccharomyces pombe (strain 972 / ATCC 24843) (Fission yeast).